The primary structure comprises 692 residues: Formate hydrogenlyase transcriptional activator (692 aa).

The 143-residue stretch at Asp202–Val344 folds into the GAF domain. Residues Ile381–Leu610 form the Sigma-54 factor interaction domain. Residues Gly409–Glu416 and Ala472–Glu481 each bind ATP. The segment at residues Pro663 to Lys682 is a DNA-binding region (H-T-H motif).

In terms of biological role, required for induction of expression of the formate dehydrogenase H and hydrogenase-3 structural genes. In Salmonella typhimurium (strain SL1344), this protein is Formate hydrogenlyase transcriptional activator (fhlA).